Reading from the N-terminus, the 91-residue chain is Proline, histidine and glycine-rich protein 1 (91 aa).

Residues 1-91 (MHPGGKGHCG…HCGPHPGPHH (91 aa)) are disordered. Gly residues-rich tracts occupy residues 33 to 42 (HPGHGPGHCP), 49 to 63 (GHGGPSHGHGPGHCP), and 70 to 82 (GHGGPSHGHGPGH).

This Mus musculus (Mouse) protein is Proline, histidine and glycine-rich protein 1 (Phgr1).